The chain runs to 500 residues: Glutamate--tRNA ligase (500 aa).

Residues 12–22 carry the 'HIGH' region motif; the sequence is PSPTGHLHIGN. The short motif at 259–263 is the 'KMSKS' region element; it reads KLSKR. Residue K262 coordinates ATP.

This sequence belongs to the class-I aminoacyl-tRNA synthetase family. Glutamate--tRNA ligase type 1 subfamily. Monomer.

It is found in the cytoplasm. It carries out the reaction tRNA(Glu) + L-glutamate + ATP = L-glutamyl-tRNA(Glu) + AMP + diphosphate. Its function is as follows. Catalyzes the attachment of glutamate to tRNA(Glu) in a two-step reaction: glutamate is first activated by ATP to form Glu-AMP and then transferred to the acceptor end of tRNA(Glu). In Lactobacillus delbrueckii subsp. bulgaricus (strain ATCC BAA-365 / Lb-18), this protein is Glutamate--tRNA ligase.